The following is a 3027-amino-acid chain: DmX-like protein 1 (3027 aa).

WD repeat units lie at residues 108–145 (FLES…KPTE), 166–206 (KTAS…RTAV), and 229–277 (AHPR…NDCL). Ser-324, Ser-422, Ser-425, and Ser-436 each carry phosphoserine. Polar residues predominate over residues 420-433 (PSSEASVEDSNQAD). The interval 420-450 (PSSEASVEDSNQADVKSDEETDDGVDDLKIN) is disordered. One copy of the WD 4 repeat lies at 476–516 (DHQIEVLLSEWSKNADMLFSIHPMDGSLLVWHVDWLDEYQP). Positions 563–584 (KQKPSGLTRSTSMLISSGHNKS) are disordered. The residue at position 574 (Ser-574) is a Phosphoserine. WD repeat units follow at residues 580–621 (GHNK…ESAF), 628–665 (SHKS…RTPD), and 848–895 (GKDS…IPVS). 2 positions are modified to phosphoserine: Ser-918 and Ser-924. WD repeat units lie at residues 968-1010 (PSAG…GESA), 1134-1175 (SNTK…VQDQ), and 1211-1251 (GSPP…EPVI). Ser-1830, Ser-1896, Ser-1908, and Ser-1970 each carry phosphoserine. Disordered regions lie at residues 2367-2412 (PSKE…SSAP) and 2446-2468 (SRAE…DDDD). Residues 2451-2468 (DSEESLGSDDDDNDDDDD) show a composition bias toward acidic residues. WD repeat units follow at residues 2742–2783 (KAIN…TCFR), 2785–2824 (GGNS…CPVT), 2836–2878 (CHNK…ANSL), 2884–2923 (CHDS…QRQL), 2926–2965 (SHDS…LLHT), and 2978–3016 (NIGT…SPLN).

In terms of tissue distribution, expressed in bone, breast, eye, foreskin, heart, parathyroid, small intestine, testis, tonsils, placenta and uterus.

In Homo sapiens (Human), this protein is DmX-like protein 1 (DMXL1).